A 284-amino-acid polypeptide reads, in one-letter code: Large ribosomal subunit protein uL2 (284 aa).

Positions 232–284 (RGTAMNPVDHPHGGGEGRHNGYIPRTPWGKVTKGLKTRDKRKSNKWIVKDRRK) are disordered. Residues 240–250 (DHPHGGGEGRH) show a composition bias toward basic and acidic residues. Basic residues predominate over residues 264-284 (KGLKTRDKRKSNKWIVKDRRK).

This sequence belongs to the universal ribosomal protein uL2 family. In terms of assembly, part of the 50S ribosomal subunit. Forms a bridge to the 30S subunit in the 70S ribosome.

One of the primary rRNA binding proteins. Required for association of the 30S and 50S subunits to form the 70S ribosome, for tRNA binding and peptide bond formation. It has been suggested to have peptidyltransferase activity; this is somewhat controversial. Makes several contacts with the 16S rRNA in the 70S ribosome. The protein is Large ribosomal subunit protein uL2 of Chlamydia felis (strain Fe/C-56) (Chlamydophila felis).